The chain runs to 308 residues: 1D-myo-inositol 2-acetamido-2-deoxy-alpha-D-glucopyranoside deacetylase (308 aa).

Zn(2+)-binding residues include His-13, Asp-16, and His-147.

The protein belongs to the MshB deacetylase family. The cofactor is Zn(2+).

It carries out the reaction 1D-myo-inositol 2-acetamido-2-deoxy-alpha-D-glucopyranoside + H2O = 1D-myo-inositol 2-amino-2-deoxy-alpha-D-glucopyranoside + acetate. Its function is as follows. Catalyzes the deacetylation of 1D-myo-inositol 2-acetamido-2-deoxy-alpha-D-glucopyranoside (GlcNAc-Ins) in the mycothiol biosynthesis pathway. The protein is 1D-myo-inositol 2-acetamido-2-deoxy-alpha-D-glucopyranoside deacetylase of Mycobacterium leprae (strain Br4923).